The chain runs to 50 residues: Sperm protamine P1 (50 aa).

Cystine bridges form between cysteine 7–cysteine 15 and cysteine 38–cysteine 46.

It belongs to the protamine P1 family. As to quaternary structure, cross-linked by interchain disulfide bonds around the DNA-helix. In terms of tissue distribution, testis.

The protein localises to the nucleus. Its subcellular location is the chromosome. Functionally, protamines substitute for histones in the chromatin of sperm during the haploid phase of spermatogenesis. They compact sperm DNA into a highly condensed, stable and inactive complex. This chain is Sperm protamine P1 (PRM1), found in Equus caballus (Horse).